A 229-amino-acid polypeptide reads, in one-letter code: Large ribosomal subunit protein bL25 (229 aa).

Disordered regions lie at residues 1-21 (MDII…ASSR) and 182-229 (NAPE…KDKK). The span at 195–222 (PAAGAPAAGAAAAPAAGAAAPAKGAAPA) shows a compositional bias: low complexity.

The protein belongs to the bacterial ribosomal protein bL25 family. CTC subfamily. Part of the 50S ribosomal subunit; part of the 5S rRNA/L5/L18/L25 subcomplex. Contacts the 5S rRNA. Binds to the 5S rRNA independently of L5 and L18.

In terms of biological role, this is one of the proteins that binds to the 5S RNA in the ribosome where it forms part of the central protuberance. In Sorangium cellulosum (strain So ce56) (Polyangium cellulosum (strain So ce56)), this protein is Large ribosomal subunit protein bL25.